The sequence spans 286 residues: tRNA uridine(34) hydroxylase (286 aa).

The Rhodanese domain maps to 130 to 225 (RGDDVVFFDG…YGETFGDRGL (96 aa)). The Cysteine persulfide intermediate role is filled by Cys-185.

This sequence belongs to the TrhO family.

It catalyses the reaction uridine(34) in tRNA + AH2 + O2 = 5-hydroxyuridine(34) in tRNA + A + H2O. Functionally, catalyzes oxygen-dependent 5-hydroxyuridine (ho5U) modification at position 34 in tRNAs. The sequence is that of tRNA uridine(34) hydroxylase from Rhodococcus erythropolis (strain PR4 / NBRC 100887).